An 81-amino-acid polypeptide reads, in one-letter code: Putative defensin-like protein 25 (81 aa).

A signal peptide spans 1-23; that stretch reads MASLKVFSFALILVLTFSVDVEG. 4 cysteine pairs are disulfide-bonded: cysteine 33-cysteine 81, cysteine 43-cysteine 68, cysteine 52-cysteine 77, and cysteine 56-cysteine 79.

It belongs to the DEFL family.

It is found in the secreted. The chain is Putative defensin-like protein 25 from Arabidopsis thaliana (Mouse-ear cress).